The following is a 544-amino-acid chain: Chaperonin GroEL (544 aa).

Residues 30–33 (TLGP), lysine 51, 87–91 (DGTTT), glycine 415, 480–482 (DAA), and aspartate 496 each bind ATP.

It belongs to the chaperonin (HSP60) family. As to quaternary structure, forms a cylinder of 14 subunits composed of two heptameric rings stacked back-to-back. Interacts with the co-chaperonin GroES.

The protein resides in the cytoplasm. It catalyses the reaction ATP + H2O + a folded polypeptide = ADP + phosphate + an unfolded polypeptide.. Its function is as follows. Together with its co-chaperonin GroES, plays an essential role in assisting protein folding. The GroEL-GroES system forms a nano-cage that allows encapsulation of the non-native substrate proteins and provides a physical environment optimized to promote and accelerate protein folding. In Sulfurihydrogenibium sp. (strain YO3AOP1), this protein is Chaperonin GroEL.